We begin with the raw amino-acid sequence, 468 residues long: 3-isopropylmalate dehydratase large subunit (468 aa).

Positions 349, 409, and 412 each coordinate [4Fe-4S] cluster.

Belongs to the aconitase/IPM isomerase family. LeuC type 1 subfamily. Heterodimer of LeuC and LeuD. It depends on [4Fe-4S] cluster as a cofactor.

The catalysed reaction is (2R,3S)-3-isopropylmalate = (2S)-2-isopropylmalate. The protein operates within amino-acid biosynthesis; L-leucine biosynthesis; L-leucine from 3-methyl-2-oxobutanoate: step 2/4. Catalyzes the isomerization between 2-isopropylmalate and 3-isopropylmalate, via the formation of 2-isopropylmaleate. In Nitrobacter hamburgensis (strain DSM 10229 / NCIMB 13809 / X14), this protein is 3-isopropylmalate dehydratase large subunit.